The sequence spans 794 residues: Alpha-1,3-galactosidase B (794 aa).

Positions 1–57 (MEGNLSFSLMEASGRSIFFLIEGIREQSIKNMFSRMFSWSFVVAACLAGLFPAQSQG) are cleaved as a signal peptide. PbH1 repeat units follow at residues 468–499 (SEDFHMKGGGVMVRKGTGRVHTAGADATHFSN), 609–631 (YPSVVFRNNIVRNNRARGSLFTT), 632–654 (PERVLVEGNLFDHSSGSAILLAG), 665–686 (CHEVVIRKNTFINNLTSRYQFT), and 707–728 (HRNVLIENNVFKTFDVPLLFAI).

Belongs to the glycosyl hydrolase 110 family. B subfamily.

It carries out the reaction Hydrolysis of terminal, non-reducing branched (1-&gt;3)-alpha-D-galactosidic residues, producing free D-galactose.. The enzyme catalyses Hydrolysis of terminal, non-reducing linear (1-&gt;3)-alpha-D-galactosidic residues, producing free D-galactose.. The catalysed reaction is Hydrolysis of terminal, non-reducing alpha-D-galactose residues in alpha-D-galactosides, including galactose oligosaccharides, galactomannans and galactolipids.. Alpha-galactosidase. Removes both branched alpha-1,3-linked galactose residues of blood group B antigens and linear alpha-1,3-linked galactose structures. This is Alpha-1,3-galactosidase B (glaB) from Akkermansia muciniphila (strain ATCC BAA-835 / DSM 22959 / JCM 33894 / BCRC 81048 / CCUG 64013 / CIP 107961 / Muc).